Here is a 379-residue protein sequence, read N- to C-terminus: Sialidase-2 (379 aa).

The FRIP motif motif lies at Y20–P23. 2 residues coordinate substrate: R21 and R41. D46 functions as the Proton acceptor in the catalytic mechanism. The stretch at V127–P138 is one BNR 1 repeat. Positions 179 and 181 each coordinate substrate. One copy of the BNR 2 repeat lies at F197–L208. Substrate is bound by residues E218, R237, and R303. R303 is a catalytic residue. Catalysis depends on Y333, which acts as the Nucleophile. The active site involves E354.

It belongs to the glycosyl hydrolase 33 family. In terms of tissue distribution, highly expressed in heart.

The protein resides in the cytoplasm. The protein localises to the cytosol. It catalyses the reaction Hydrolysis of alpha-(2-&gt;3)-, alpha-(2-&gt;6)-, alpha-(2-&gt;8)- glycosidic linkages of terminal sialic acid residues in oligosaccharides, glycoproteins, glycolipids, colominic acid and synthetic substrates.. The enzyme catalyses a ganglioside GD1a + H2O = a ganglioside GM1 + N-acetylneuraminate. It carries out the reaction a ganglioside GM1 + H2O = a ganglioside GA1 + N-acetylneuraminate. The catalysed reaction is a ganglioside GT1b + H2O = a ganglioside GD1b + N-acetylneuraminate. It catalyses the reaction a ganglioside GD1b + H2O = a ganglioside GM1 + N-acetylneuraminate. The enzyme catalyses a ganglioside GD3 + H2O = a ganglioside GM3 + N-acetylneuraminate. It carries out the reaction a ganglioside GM3 + H2O = a beta-D-galactosyl-(1-&gt;4)-beta-D-glucosyl-(1&lt;-&gt;1)-ceramide + N-acetylneuraminate. The catalysed reaction is a ganglioside GM2 + H2O = a ganglioside GA2 + N-acetylneuraminate. It catalyses the reaction a neolactoside IV(3)-alpha-NeuAc-nLc4Cer(d18:1(4E)) + H2O = a neolactoside nLc4Cer(d18:1(4E)) + N-acetylneuraminate. The enzyme catalyses N-acetyl-alpha-neuraminosyl-(2-&gt;3)-beta-D-galactosyl-(1-&gt;4)-D-glucose + H2O = lactose + N-acetylneuraminate. Exo-alpha-sialidase that catalyzes the hydrolytic cleavage of the terminal sialic acid (N-acetylneuraminic acid, Neu5Ac) of a glycan moiety in the catabolism of glycolipids, glycoproteins and oligosacharides. Recognizes sialyl linkage positions of the glycan moiety as well as the supramolecular organization of the sialoglycoconjugate. Displays preference for alpha-(2-&gt;3)-sialylated GD1a and GT1B gangliosides over alpha-(2-&gt;8)-sialylated GD1b, in both monomeric forms and micelles. Hydrolyzes exclusively monomeric GM1 ganglioside, but has no activity toward the miscellar form. Has lower sialidase activity for glycoproteins such as fetuin and TF/transferrin that carry a mixture of alpha-(2-&gt;3) and alpha-(2-&gt;6)-sialyl linkages. Cleaves milk oligosaccharide alpha-(2-&gt;3)-sialyllactose, but is inactive toward isomer alpha-(2-&gt;6)-sialyllactose isomer. Has no activity toward colominic acid, a homomer of alpha-(2-&gt;8)-linked Neu5Ac residues. This Mus musculus (Mouse) protein is Sialidase-2 (Neu2).